We begin with the raw amino-acid sequence, 278 residues long: ADP-dependent (S)-NAD(P)H-hydrate dehydratase (278 aa).

One can recognise a YjeF C-terminal domain in the interval 5–272; the sequence is TTEIVSRTII…TRIPTYMHRF (268 aa). The (6S)-NADPHX site is built by Ala40, Gly103, and His152. Gly214 serves as a coordination point for AMP. Asp215 provides a ligand contact to (6S)-NADPHX.

The protein belongs to the NnrD/CARKD family. In terms of assembly, homotetramer. Mg(2+) serves as cofactor.

It carries out the reaction (6S)-NADHX + ADP = AMP + phosphate + NADH + H(+). The enzyme catalyses (6S)-NADPHX + ADP = AMP + phosphate + NADPH + H(+). In terms of biological role, catalyzes the dehydration of the S-form of NAD(P)HX at the expense of ADP, which is converted to AMP. Together with NAD(P)HX epimerase, which catalyzes the epimerization of the S- and R-forms, the enzyme allows the repair of both epimers of NAD(P)HX, a damaged form of NAD(P)H that is a result of enzymatic or heat-dependent hydration. This chain is ADP-dependent (S)-NAD(P)H-hydrate dehydratase, found in Lactiplantibacillus plantarum (strain ATCC BAA-793 / NCIMB 8826 / WCFS1) (Lactobacillus plantarum).